Reading from the N-terminus, the 109-residue chain is uncharacterized protein (109 aa).

A run of 3 helical transmembrane segments spans residues His16–Phe36, Leu52–Leu72, and Ile87–Val107.

The protein resides in the cell membrane. This is an uncharacterized protein from Salmonella typhimurium (strain LT2 / SGSC1412 / ATCC 700720).